The following is a 171-amino-acid chain: Moubatin (171 aa).

The first 15 residues, 1 to 15 (MMLVLTTLIFSFSAS), serve as a signal peptide directing secretion. 3 disulfides stabilise this stretch: cysteine 23/cysteine 144, cysteine 55/cysteine 166, and cysteine 118/cysteine 145.

Belongs to the calycin superfamily. Lipocalin family. In terms of processing, the N-terminus is blocked. Expressed in salivary glands.

It is found in the secreted. Functionally, tick salivary platelet aggregation inhibitor that plays an important part in the anti-hemostatic strategy of ticks. Acts by scavenging thromboxane A2 (TXA2), a potent inducer of platelet aggregation and blood vessel constriction. As a consequence, is a specific inhibitor of collagen-induced platelet aggregation. In addition, it also acts as a potent inhibitor of TXA2-mediated vasoconstriction. Has also been found to bind leukotriene B4 (LTB4) (which also derives from arachidonic acid, as TXA2) with affinities in the nanomolar range. It does not interact with complement protein C5. The sequence is that of Moubatin from Ornithodoros moubata (Soft tick).